Here is an 842-residue protein sequence, read N- to C-terminus: Alanine--tRNA ligase (842 aa).

Positions 549, 553, 650, and 654 each coordinate Zn(2+).

Belongs to the class-II aminoacyl-tRNA synthetase family. It depends on Zn(2+) as a cofactor.

It is found in the cytoplasm. The catalysed reaction is tRNA(Ala) + L-alanine + ATP = L-alanyl-tRNA(Ala) + AMP + diphosphate. In terms of biological role, catalyzes the attachment of alanine to tRNA(Ala) in a two-step reaction: alanine is first activated by ATP to form Ala-AMP and then transferred to the acceptor end of tRNA(Ala). Also edits incorrectly charged Ser-tRNA(Ala) and Gly-tRNA(Ala) via its editing domain. The sequence is that of Alanine--tRNA ligase from Campylobacter jejuni (strain RM1221).